The primary structure comprises 97 residues: MKTALFLVFALAFIAVEGKMSRACSKPGQTVLAPDGCNHCRCSEKGILMACTKMMCPPRTIEKSCKPGTTFKHKDGCNTCKCSDDGKNALCTSKLCL.

A signal peptide spans 1 to 20 (MKTALFLVFALAFIAVEGKM). Pacifastin domains follow at residues 22-59 (RACS…CPPR) and 62-97 (EKSC…KLCL). 3 disulfides stabilise this stretch: Cys-24–Cys-42, Cys-37–Cys-56, and Cys-40–Cys-51. Residues 57 to 59 (PPR) are pro-Pro-Arg motif necessary for proteolytic processing. 3 disulfide bridges follow: Cys-65/Cys-82, Cys-77/Cys-96, and Cys-80/Cys-91.

It belongs to the protease inhibitor I19 family. Expressed by the venom gland.

It is found in the secreted. Its function is as follows. Inhibits trypsin activity and prophenoloxidase (PPO) activation, an enzyme essential for both clotting and insect innate immune responses. It does not inhibit activity of chymotrypsin and protease K, and has no effect on phenoloxidase (PO) activity. This Platymeris rhadamanthus (Red spot assassin bug) protein is U-reduvitoxin-Pr11a.